Consider the following 502-residue polypeptide: L-ornithine N(5)-monooxygenase (502 aa).

The span at 1-10 shows a compositional bias: basic and acidic residues; it reads MEPVERKLEI. The tract at residues 1 to 34 is disordered; that stretch reads MEPVERKLEIGSRSYSKMPLTQQRSSGEPPRLKA. Polar residues predominate over residues 13–26; that stretch reads RSYSKMPLTQQRSS. Residues 83–91 and Q102 each bind FAD; that span reads ERQKQFAWH. Residue K107 participates in substrate binding. Position 168 (V168) interacts with FAD. NADP(+) contacts are provided by residues 254–257 and R279; that span reads SGQS. Residues 293 to 296 and N323 each bind substrate; that span reads NEVF. 323–325 contributes to the NADP(+) binding site; it reads NYS. Residue 466–468 coordinates FAD; sequence SLL. Residue S469 coordinates substrate.

It belongs to the lysine N(6)-hydroxylase/L-ornithine N(5)-oxygenase family. In terms of assembly, homotetramer. The cofactor is FAD.

The enzyme catalyses L-ornithine + NADPH + O2 = N(5)-hydroxy-L-ornithine + NADP(+) + H2O. The catalysed reaction is L-ornithine + NADH + O2 = N(5)-hydroxy-L-ornithine + NAD(+) + H2O. The protein operates within siderophore biosynthesis. Its function is as follows. Catalyzes the conversion of L-ornithine to N(5)-hydroxyornithine, the first step in the biosynthesis of all hydroxamate-containing siderophores, such as deferriferrichrysin. The chain is L-ornithine N(5)-monooxygenase from Aspergillus oryzae (strain ATCC 42149 / RIB 40) (Yellow koji mold).